The primary structure comprises 206 residues: Thymidylate kinase (206 aa).

11-18 (GIDGAGKT) provides a ligand contact to ATP.

It belongs to the thymidylate kinase family.

The catalysed reaction is dTMP + ATP = dTDP + ADP. Phosphorylation of dTMP to form dTDP in both de novo and salvage pathways of dTTP synthesis. The sequence is that of Thymidylate kinase from Burkholderia mallei (strain NCTC 10247).